Here is a 1397-residue protein sequence, read N- to C-terminus: MSNGDVVVDADQQQAQAVVAPQQLELQIKLPSFIDQKGDLKIPSHYEETITDLKLTLTVIPKTRSLTNYLILIQGEHDVEQFGEIVTFGQIIEELALGEPECLQIQIREKPYNLAAVYEQIIRLREIVGLHYVDKVSQELGSCGGVTRFNSIKLDPVTARGEAEKSDTNEEEQEQGKGKVGKPNEKESGETKETDSQPELSREELLQLSDLVKEIEESPESINFTQATKFDNINGKVKIPLKSFAVSQWSPVPSFQKTKGDLLYLTVQTLENETFHITSHFTGFFVNKCSATTFNPALKTNEKGRYHKHYLLYELLAQLSPSFTKTIEDNEVKLSESTEHPETYLLPNNSFLAFPWVVNASDLKNIPDSSRSQLMLISNGVDGSEIIKEWNNDIQAMKELPSTNFQERLMRDKLIQKTLFDFSKTATETAINIIKGNIAPMNPGEEPDKLIYLKNGVFYSAGTSTVDVFDKTGGEEASRYVSSKDLAAIKIVNRHELKGISTLVTCIVDYMGKRIVCQAPVPGILDAAPPSEEEDDAGAEQEKKEEGKAEEDEEEEIMEKVLYGLSSDSQKILEDKSFEKPLKLLSEVFHLKPHGVKLSEQVKSEGDLVVSKDTKGLKGTDGRKYAIDLYRTTPRDIEFIEAHFKEGENDSYPHGEALIRHEAVNEWWKRKVSALFAAETEKLEKEGKLEKDGSKGTNSEEKSQIALPIDQVSFNPDAFSSDFESKEDRDEVREISKFIKEKLIPEFIEECQHQLAPFDGQQLSEQLHRYGINLRYLGYIAEQVLVKKAEYEESVEKTIKENEELVKVREAEKVEKDRREAEEAEKAKERAAAQPESSSDDKNQETIENSDAKSKENTESDDKDAEEQPVSKATYELVLANYDSLYRLAIQEMVARASKHVLRQIMKETPLELSAKAVAHFHNCLLGGEINTSPEAEIDPLEASFFSQSAISFAKLTHKDVVAQVAKEVGSRFRFTLEENWIEKLVHLPQLFREIALKFGIQWKSFDYTFTKQEFEHSQREQKQESVVDNVEKKHSKKSKKKSPALPIENKPTSFARSSIFIADDIVGFVPLVKDSSYKPTLVDEIFANARSQLLSGDKDLGMAMLAELVTIYEAIYGKVNSQTAKFYSLVAKVYQELGFDKEAAIMGRKAVVLSERSCGFDNHDTIAAYMNSAYFELANSQIANSLKLYLRAMQLWTSTYGKDHPALVNLLTNVADSLYYAKDYESALKLFNAALEACSHLNGQASEIAGLFHFKIANVLVSQQKIEKSKDSFVAANEIFQKLLGPDDSMTDQTSKYISNVAMYIEYLKARQAQSKKSPPPTQTVAPNARVSASQASAKVANGNGTGSSKSKKGKKDKSTPQSDPQIANQSVEDILKFIEGKSKPNAKSKSKHTKA.

A TPR 1 repeat occupies 30 to 63 (LPSFIDQKGDLKIPSHYEETITDLKLTLTVIPKT). Disordered stretches follow at residues 158–203 (TARG…LSRE) and 526–555 (DAAP…DEEE). The span at 161–203 (GEAEKSDTNEEEQEQGKGKVGKPNEKESGETKETDSQPELSRE) shows a compositional bias: basic and acidic residues. Residues 368–640 (DSSRSQLMLI…RTTPRDIEFI (273 aa)) form the Clu domain. The TPR 2 repeat unit spans residues 559 to 595 (EKVLYGLSSDSQKILEDKSFEKPLKLLSEVFHLKPHG). Composition is skewed to basic and acidic residues over residues 686–703 (EGKL…EEKS), 812–831 (EKVE…KERA), 839–860 (SDDK…NTES), and 1019–1033 (QREQ…NVEK). Disordered stretches follow at residues 686–707 (EGKL…QIAL), 812–869 (EKVE…EEQP), and 1019–1050 (QREQ…PIEN). Positions 1034–1043 (KHSKKSKKKS) are enriched in basic residues. 2 TPR repeats span residues 1167–1200 (IAAY…WTST) and 1209–1242 (VNLL…CSHL). Composition is skewed to polar residues over residues 1314–1338 (AQSK…SQAS) and 1362–1373 (PQSDPQIANQSV). The tract at residues 1314-1397 (AQSKKSPPPT…AKSKSKHTKA (84 aa)) is disordered. Residues 1375-1384 (DILKFIEGKS) are compositionally biased toward basic and acidic residues. Basic residues predominate over residues 1386–1397 (PNAKSKSKHTKA).

It belongs to the CLU family. As to quaternary structure, may associate with the eukaryotic translation initiation factor 3 (eIF-3) complex.

The protein localises to the cytoplasm. MRNA-binding protein involved in proper cytoplasmic distribution of mitochondria. This chain is Clustered mitochondria protein homolog, found in Lodderomyces elongisporus (strain ATCC 11503 / CBS 2605 / JCM 1781 / NBRC 1676 / NRRL YB-4239) (Yeast).